Here is a 1875-residue protein sequence, read N- to C-terminus: Nonribosomal peptide synthetase otaB (1875 aa).

Residues Gly202–Ala590 are adenylation 1. The Carrier domain maps to Ser724–Gly800. Ser761 carries the O-(pantetheine 4'-phosphoryl)serine modification. The condensation stretch occupies residues Glu836–Leu1245. Residues Gln1264–Arg1659 form an adenylation 2 region.

Belongs to the NRP synthetase family.

It carries out the reaction 7-carboxymellein + L-phenylalanine + ATP = ochratoxin B + ADP + phosphate + H(+). The protein operates within mycotoxin biosynthesis. Nonribosomal peptide synthetase; part of the gene cluster that mediates the biosynthesis of ochratoxin A (OTA), a mycotoxin composed of a chlorinated type I polyketide dihydroisocoumarin moiety linked to L-phenylalanine, and demonstrated to have nephrotoxic, immunotoxic, genotoxic, neurotoxic, and teratogenic properties. OtaB is responsible for the linking of phenylalanine to the dihydroisocoumarin ring. The pathway begins with the highly reducing polyketide synthase otaA that catalyzes the formation of the isocoumarin group during the initial stages of biosynthesis, starting from one acetate and 4 malonate units, to originate the characteristic pentaketide skeleton 7-methylmellein (7-MM) of the OTA molecule. The newly identified cyclase otaY might be involved in the polyketide cyclization reaction during the initial steps of the OTA biosynthesis. 7-MM is then oxidized into 7-carboxymellein (also called ochratoxin beta) by the cytochrome P450 monooxygenase otaC. The NRPS encoded by the otaB gene is involved in the linking of phenylalanine to the dihydroisocoumarin ring. The reaction catalyzed by NRPS results in the production of ochratoxin B (OTB), which is the non-chlorinated analog of OTA and which subsequently serves as the substrate of the halogenase otaD for chlorination activity to form the final molecular structure of OTA, containing a chlorine atom in the C-5 position of the molecule. The polypeptide is Nonribosomal peptide synthetase otaB (Aspergillus carbonarius (strain ITEM 5010)).